A 939-amino-acid chain; its full sequence is Isoleucine--tRNA ligase (939 aa).

Positions 58–68 match the 'HIGH' region motif; it reads PYANGNIHIGH. An L-isoleucyl-5'-AMP-binding site is contributed by E562. Residues 603–607 carry the 'KMSKS' region motif; sequence KMSKS. K606 is an ATP binding site. Positions 903, 906, 922, and 925 each coordinate Zn(2+).

This sequence belongs to the class-I aminoacyl-tRNA synthetase family. IleS type 1 subfamily. In terms of assembly, monomer. Requires Zn(2+) as cofactor.

It localises to the cytoplasm. The enzyme catalyses tRNA(Ile) + L-isoleucine + ATP = L-isoleucyl-tRNA(Ile) + AMP + diphosphate. In terms of biological role, catalyzes the attachment of isoleucine to tRNA(Ile). As IleRS can inadvertently accommodate and process structurally similar amino acids such as valine, to avoid such errors it has two additional distinct tRNA(Ile)-dependent editing activities. One activity is designated as 'pretransfer' editing and involves the hydrolysis of activated Val-AMP. The other activity is designated 'posttransfer' editing and involves deacylation of mischarged Val-tRNA(Ile). The protein is Isoleucine--tRNA ligase of Buchnera aphidicola subsp. Baizongia pistaciae (strain Bp).